A 405-amino-acid polypeptide reads, in one-letter code: L-rhamnonate dehydratase (405 aa).

Residues His33 and Arg59 each contribute to the substrate site. Residues Asp226, Glu252, and Glu280 each contribute to the Mg(2+) site. His329 acts as the Proton acceptor in catalysis. Glu349 serves as a coordination point for substrate.

Belongs to the mandelate racemase/muconate lactonizing enzyme family. RhamD subfamily. As to quaternary structure, homooctamer; tetramer of dimers. The cofactor is Mg(2+).

The enzyme catalyses L-rhamnonate = 2-dehydro-3-deoxy-L-rhamnonate + H2O. Catalyzes the dehydration of L-rhamnonate to 2-keto-3-deoxy-L-rhamnonate (KDR). Can also dehydrate L-lyxonate and L-mannonate, although less efficiently, but not 2-keto-4-hydroxyheptane-1,7-dioate. The protein is L-rhamnonate dehydratase (rhmD) of Salmonella typhimurium (strain LT2 / SGSC1412 / ATCC 700720).